Here is an 860-residue protein sequence, read N- to C-terminus: Nucleolar MIF4G domain-containing protein 1 (860 aa).

3 disordered regions span residues 1-172 (MAAS…AARK), 191-211 (RCLGLNKRKKKDGSSSVPLSF), and 226-339 (GKNS…EKYI). The necessary for nucleolar localization and for targeting PPP1CA to the nucleolus stretch occupies residues 1 to 269 (MAASRSAGEA…EEEEEGDVEK (269 aa)). Over residues 20-31 (VRMKRRGGRGPR) the composition is skewed to basic residues. Serine 57 is subject to Phosphoserine. The segment covering 77–99 (GGRKSRKELRKEKRHLRKARRLQ) has biased composition (basic residues). A compositionally biased stretch (basic and acidic residues) spans 115–131 (GAEEASGHRQDTEERAR). Serine 139 is modified (phosphoserine). The span at 142–151 (RKPRPSRVKA) shows a compositional bias: basic residues. Over residues 152–169 (KATAATAKTRPSAAATAA) the composition is skewed to low complexity. Acidic residues-rich tracts occupy residues 249 to 267 (SDLESDSQDESEEEEEGDV) and 278 to 293 (AQSEDDDEDTEEEQGE). The Required for efficient binding to PPP1CA and for targeting PPP1CA to the nucleolus motif lies at 307 to 310 (RVRF). The span at 312–325 (EDEEKSENSSEDGD) shows a compositional bias: acidic residues. Phosphoserine is present on residues serine 317, serine 320, and serine 321. The region spanning 362–559 (KKHVKGLLNR…ETMLALKNND (198 aa)) is the MIF4G domain. The MI domain occupies 654–770 (DIRRNIFCTI…SLSILKVVEF (117 aa)).

Belongs to the CWC22 family. May interact with EIF4A1, EIF4A2 and EIF4A3. Interacts with PPP1CA and PPP1CC. Expressed in heart and skeletal muscle.

It is found in the nucleus. The protein resides in the nucleolus. Plays a role in targeting PPP1CA to the nucleolus. The polypeptide is Nucleolar MIF4G domain-containing protein 1 (NOM1) (Homo sapiens (Human)).